A 393-amino-acid polypeptide reads, in one-letter code: Outer membrane protein assembly factor BamB (393 aa).

Positions 1 to 19 (MQLRKTLLVGLVSVALLSG) are cleaved as a signal peptide. C20 carries N-palmitoyl cysteine lipidation. C20 is lipidated: S-diacylglycerol cysteine.

Belongs to the BamB family. Part of the Bam complex, which is composed of the outer membrane protein BamA, and four lipoproteins BamB, BamC, BamD and BamE.

The protein localises to the cell outer membrane. Its function is as follows. Part of the outer membrane protein assembly complex, which is involved in assembly and insertion of beta-barrel proteins into the outer membrane. The chain is Outer membrane protein assembly factor BamB from Yersinia pestis.